The chain runs to 527 residues: Lysine--tRNA ligase (527 aa).

Mg(2+) is bound by residues glutamate 431 and glutamate 438.

This sequence belongs to the class-II aminoacyl-tRNA synthetase family. In terms of assembly, homodimer. It depends on Mg(2+) as a cofactor.

It localises to the cytoplasm. It catalyses the reaction tRNA(Lys) + L-lysine + ATP = L-lysyl-tRNA(Lys) + AMP + diphosphate. The polypeptide is Lysine--tRNA ligase (lysS) (Chlamydia pneumoniae (Chlamydophila pneumoniae)).